The primary structure comprises 558 residues: Leucine-rich repeat-containing protein 71 (558 aa).

Positions 1 to 18 (MSSEPSTTGTSPRTPRPG) are enriched in low complexity. Disordered regions lie at residues 1–55 (MSSE…NPEE) and 86–112 (RVQQSSVPSASTSEKPVLDDQRPSASC). Basic and acidic residues predominate over residues 28-38 (KKGDRAAKDKT). Over residues 86–99 (RVQQSSVPSASTSE) the composition is skewed to polar residues. LRR repeat units follow at residues 196 to 216 (TLRKVSLEGNPIPEQSFSKLM), 221 to 241 (TIVHLSLRNNNINDHGAQLLG), 253 to 274 (TLVSLNLAFNHIGDVGAGYIAD), and 281 to 302 (SLLWLSLAHNHIQDKGALKLAE). Positions 325 to 415 (GTQERSRSPS…DAAKAGKGKV (91 aa)) are disordered. Composition is skewed to basic and acidic residues over residues 339-348 (GDSKAEREKS) and 380-391 (KTGEVVKKEEKL).

This chain is Leucine-rich repeat-containing protein 71 (Lrrc71), found in Mus musculus (Mouse).